Here is a 611-residue protein sequence, read N- to C-terminus: RAC serine/threonine-protein kinase (611 aa).

The span at 14-25 shows a compositional bias: low complexity; sequence VVASAPAPGSAS. Disordered stretches follow at residues 14 to 33 and 45 to 88; these read VVAS…SPTT and QSTH…NTTF. At serine 30 the chain carries Phosphoserine. Positions 106 to 211 constitute a PH domain; it reads QVVKEGWLMK…WTEAIRNVSS (106 aa). Residues 266–523 form the Protein kinase domain; sequence FEFLKVLGKG…VKEIQAHPFF (258 aa). Residues 272–280 and lysine 295 each bind ATP; that span reads LGKGTFGKV. Aspartate 389 functions as the Proton acceptor in the catalytic mechanism. Positions 524–597 constitute an AGC-kinase C-terminal domain; that stretch reads ASINWTDLVL…QGDMASTLGT (74 aa). Serine 586 is subject to Phosphoserine.

It belongs to the protein kinase superfamily. AGC Ser/Thr protein kinase family. RAC subfamily. Interacts with trbl. In terms of processing, phosphorylated and activated by Pk61C/PDK1. Phosphorylated on Ser-586 by the TORC2 complex. As to expression, ubiquitously expressed. Present in ovary, where it is concentrated at the basal side of follicle cells.

It is found in the cytoplasm. The protein localises to the cytosol. The protein resides in the cell membrane. It carries out the reaction L-seryl-[protein] + ATP = O-phospho-L-seryl-[protein] + ADP + H(+). The enzyme catalyses L-threonyl-[protein] + ATP = O-phospho-L-threonyl-[protein] + ADP + H(+). Functionally, serine/threonine kinase involved in various developmental processes. During early embryogenesis, acts as a survival protein. During mid-embryogenesis, phosphorylates and activates trh, a transcription factor required for tracheal cell fate determination. Also regulates tracheal cell migration. Later in development, acts downstream of PI3K and Pk61C/PDK1 in the insulin receptor transduction pathway which regulates cell growth and organ size, by phosphorylating and antagonizing FOXO transcription factor. Controls follicle cell size during oogenesis. May also stimulate cell growth by phosphorylating Gig/Tsc2 and inactivating the Tsc complex. Dephosphorylation of 'Ser-586' by Phlpp triggers apoptosis and suppression of tumor growth. In Drosophila melanogaster (Fruit fly), this protein is RAC serine/threonine-protein kinase.